Reading from the N-terminus, the 310-residue chain is tRNA dimethylallyltransferase (310 aa).

Position 11-18 (11-18 (GPTGVGKT)) interacts with ATP. 13–18 (TGVGKT) serves as a coordination point for substrate.

Belongs to the IPP transferase family. As to quaternary structure, monomer. It depends on Mg(2+) as a cofactor.

The catalysed reaction is adenosine(37) in tRNA + dimethylallyl diphosphate = N(6)-dimethylallyladenosine(37) in tRNA + diphosphate. Its function is as follows. Catalyzes the transfer of a dimethylallyl group onto the adenine at position 37 in tRNAs that read codons beginning with uridine, leading to the formation of N6-(dimethylallyl)adenosine (i(6)A). This is tRNA dimethylallyltransferase from Latilactobacillus sakei subsp. sakei (strain 23K) (Lactobacillus sakei subsp. sakei).